The chain runs to 229 residues: Probable ribonuclease H (229 aa).

Residues 42–164 (LQDISLEFDK…ADFLANSAAK (123 aa)) form the RNase H type-1 domain. A divalent metal cation is bound by residues Glu-60, Asp-87, and Asp-156.

Belongs to the RNase H family. Requires a divalent metal cation as cofactor.

It catalyses the reaction Endonucleolytic cleavage to 5'-phosphomonoester.. Functionally, endonuclease that specifically degrades the RNA of RNA-DNA hybrids. The protein is Probable ribonuclease H (RNH1) of Acanthamoeba polyphaga mimivirus (APMV).